A 93-amino-acid polypeptide reads, in one-letter code: Small ribosomal subunit protein uS19 (93 aa).

This sequence belongs to the universal ribosomal protein uS19 family.

Protein S19 forms a complex with S13 that binds strongly to the 16S ribosomal RNA. In Limosilactobacillus fermentum (strain NBRC 3956 / LMG 18251) (Lactobacillus fermentum), this protein is Small ribosomal subunit protein uS19.